A 248-amino-acid polypeptide reads, in one-letter code: Probable transcriptional regulatory protein Acid345_2125 (248 aa).

The protein belongs to the TACO1 family.

It localises to the cytoplasm. The chain is Probable transcriptional regulatory protein Acid345_2125 from Koribacter versatilis (strain Ellin345).